The sequence spans 587 residues: V-type proton ATPase catalytic subunit A (587 aa).

243-250 (GAFGCGKT) serves as a coordination point for ATP.

Belongs to the ATPase alpha/beta chains family. In terms of assembly, V-ATPase is a heteromultimeric enzyme composed of a peripheral catalytic V1 complex (main components: subunits A, B, C, D, E, and F) attached to an integral membrane V0 proton pore complex (main component: the proteolipid protein).

The enzyme catalyses ATP + H2O + 4 H(+)(in) = ADP + phosphate + 5 H(+)(out). Catalytic subunit of the peripheral V1 complex of vacuolar ATPase. V-ATPase vacuolar ATPase is responsible for acidifying a variety of intracellular compartments in eukaryotic cells. The polypeptide is V-type proton ATPase catalytic subunit A (Cyanidium caldarium (Red alga)).